Here is a 170-residue protein sequence, read N- to C-terminus: Peroxidase 2 (170 aa).

Asn-9 is a glycosylation site (N-linked (GlcNAc...) asparagine). His-24 lines the heme b pocket. Thr-25 lines the Ca(2+) pocket. Cys-31 and Cys-59 are disulfide-bonded. Residues Asp-73, Thr-76, and Asp-81 each contribute to the Ca(2+) site.

This sequence belongs to the peroxidase family. Classical plant (class III) peroxidase subfamily. The cofactor is Ca(2+). Requires heme b as cofactor.

It catalyses the reaction 2 a phenolic donor + H2O2 = 2 a phenolic radical donor + 2 H2O. In terms of biological role, removal of H(2)O(2), oxidation of toxic reductants, biosynthesis and degradation of lignin, suberization, auxin catabolism, response to environmental stresses such as wounding, pathogen attack and oxidative stress. These functions might be dependent on each isozyme/isoform in each plant tissue. Its function is as follows. Involved in defense response to powdery meldew fungus. This chain is Peroxidase 2, found in Hordeum vulgare (Barley).